The chain runs to 400 residues: Serine/threonine-protein kinase AFC3 (400 aa).

The interval 1–29 (MIANGFESMDKERVRKRPRMTWDEAPAEP) is disordered. One can recognise a Protein kinase domain in the interval 71–396 (YKILSKMGEG…ANEALDHPFF (326 aa)). ATP is bound by residues 77–85 (MGEGTFGRV) and Lys100. The active-site Proton acceptor is the Asp196.

It belongs to the protein kinase superfamily. CMGC Ser/Thr protein kinase family. Lammer subfamily.

The catalysed reaction is L-seryl-[protein] + ATP = O-phospho-L-seryl-[protein] + ADP + H(+). The enzyme catalyses L-threonyl-[protein] + ATP = O-phospho-L-threonyl-[protein] + ADP + H(+). It carries out the reaction L-tyrosyl-[protein] + ATP = O-phospho-L-tyrosyl-[protein] + ADP + H(+). In Arabidopsis thaliana (Mouse-ear cress), this protein is Serine/threonine-protein kinase AFC3 (AFC3).